The chain runs to 258 residues: Imidazole glycerol phosphate synthase subunit HisF (258 aa).

Residues Asp11 and Asp130 contribute to the active site.

It belongs to the HisA/HisF family. Heterodimer of HisH and HisF.

It is found in the cytoplasm. It catalyses the reaction 5-[(5-phospho-1-deoxy-D-ribulos-1-ylimino)methylamino]-1-(5-phospho-beta-D-ribosyl)imidazole-4-carboxamide + L-glutamine = D-erythro-1-(imidazol-4-yl)glycerol 3-phosphate + 5-amino-1-(5-phospho-beta-D-ribosyl)imidazole-4-carboxamide + L-glutamate + H(+). It functions in the pathway amino-acid biosynthesis; L-histidine biosynthesis; L-histidine from 5-phospho-alpha-D-ribose 1-diphosphate: step 5/9. IGPS catalyzes the conversion of PRFAR and glutamine to IGP, AICAR and glutamate. The HisF subunit catalyzes the cyclization activity that produces IGP and AICAR from PRFAR using the ammonia provided by the HisH subunit. The chain is Imidazole glycerol phosphate synthase subunit HisF from Escherichia coli O6:K15:H31 (strain 536 / UPEC).